The chain runs to 141 residues: Large ribosomal subunit protein uL16 (141 aa).

Positions Met1 to Ala21 are disordered.

This sequence belongs to the universal ribosomal protein uL16 family. In terms of assembly, part of the 50S ribosomal subunit.

Binds 23S rRNA and is also seen to make contacts with the A and possibly P site tRNAs. This Roseiflexus sp. (strain RS-1) protein is Large ribosomal subunit protein uL16.